The chain runs to 729 residues: MQLEKQLQHAQCTFPFSHLGLLKTDNAFTITAWVPNATGIKVIDLATDKAIGSLKRQAQSDLFTAEFTKGNPPAVYAFEVKNAQGSYRIIDPYQFQDQAFHAVHFVDHLPKNVYQQLGAQLIDLDVGLKTPIAATRFAVFAPNASAVSVIGDFNYWDGSCLPMQKTDFGYWVLVVPGVKAGDKYKYQIKDAHGNELPHKADPVGFYAEQYPSHASVVFDHEQYQWQDTKWQQQVKGDKYTQAMSIYEVHLGSWKRPDSQSGKTYLSYHELVDELIPYVKDMGYTHLELLPISEFPFDGSWGYQPVGLFAPTSRFGGPDDFKYFVDQCHQNGIGVIIDWVPAHFPEDGHGLARFDGTHVYEYEDPRKGWHPDWNSCIYDFGKDTVRQFLVANALFWLDKYHVDGLRVDAVASMLYLDYSREADEWVPNVDGGNHNYEAISLLQWMNKEVYSHYPNAMTIAEESTSFAKVSRPVFEGGLGFGFKWNMGWMHDSLHYISKDPSYRRYHHGEMTFSMVYAYDESFVLPISHDEVVHGKGSLLRKMPGDEWQQAANLRCYAAFMYAHPGKKLNFMGNEIGQSAEWNHDSSINWHLLDYDKHSGIQALYRDLNTLYAEYPALHELDHDPAGFEWIDHENAEQSTLAMLRQSKGGKQQVYALSNFTPVPRTNFRLGVKAPGEYSILLNTDDKQYWGSGHSQNKTIKADKTPWNNQAYSISVSLPPLATVFILYKGQ.

The active-site Nucleophile is aspartate 407. Catalysis depends on glutamate 460, which acts as the Proton donor.

This sequence belongs to the glycosyl hydrolase 13 family. GlgB subfamily. In terms of assembly, monomer.

The enzyme catalyses Transfers a segment of a (1-&gt;4)-alpha-D-glucan chain to a primary hydroxy group in a similar glucan chain.. It participates in glycan biosynthesis; glycogen biosynthesis. Functionally, catalyzes the formation of the alpha-1,6-glucosidic linkages in glycogen by scission of a 1,4-alpha-linked oligosaccharide from growing alpha-1,4-glucan chains and the subsequent attachment of the oligosaccharide to the alpha-1,6 position. This chain is 1,4-alpha-glucan branching enzyme GlgB, found in Pseudoalteromonas atlantica (strain T6c / ATCC BAA-1087).